The following is a 55-amino-acid chain: Chromatin protein Cren7 (55 aa).

The protein belongs to the Cren7 family. In terms of assembly, monomer. Post-translationally, methylated at multiple sites, to varying extents.

The protein localises to the chromosome. The protein resides in the cytoplasm. Functionally, a chromatin protein, binds double-stranded DNA without sequence specificity. Constrains negative DNA supercoils. In Ignicoccus hospitalis (strain KIN4/I / DSM 18386 / JCM 14125), this protein is Chromatin protein Cren7.